The chain runs to 395 residues: Probable peptidoglycan glycosyltransferase FtsW (395 aa).

Residues 1-24 lie on the Cytoplasmic side of the membrane; it reads MADLAAGVAERGPRLSLWSSLDQR. Residues 25–45 traverse the membrane as a helical segment; it reads LVWVVAATALLGLVMVASASI. The Periplasmic segment spans residues 46–62; the sequence is SMAEQATGDPFYFFKRQ. A helical transmembrane segment spans residues 63 to 83; the sequence is IFFALLGLGMALALLQIPLAT. The Cytoplasmic segment spans residues 84-86; the sequence is WER. The chain crosses the membrane as a helical span at residues 87-107; sequence AGPGLLLGALALLVLVLIPGV. Over 108 to 116 the chain is Periplasmic; that stretch reads GREVNGAVR. The helical transmembrane segment at 117–137 threads the bilayer; sequence WIPLGVFNLQVAEVVKVLLAL. The Cytoplasmic segment spans residues 138 to 152; that stretch reads YLAGFLVRRQQQLRT. The helical transmembrane segment at 153 to 173 threads the bilayer; the sequence is SMAAFLVPVLVSAACAFLLLL. The Periplasmic segment spans residues 174 to 178; the sequence is QPDFG. Residues 179-199 traverse the membrane as a helical segment; that stretch reads TALMLMALAVGLLYLAGAPLW. Arg200 is a topological domain (cytoplasmic). The helical transmembrane segment at 201-221 threads the bilayer; the sequence is FAALVGVLAAAAAALVVYSPY. Residues 222-276 lie on the Periplasmic side of the membrane; the sequence is RWQRVTAFMDPWSDPFNTGFQLTQSLIAIGRGDWLGVGLGGSVQKLFYLPEAHTD. The chain crosses the membrane as a helical span at residues 277 to 297; it reads FVFSVLAEELGWLGVLAVVLL. The Cytoplasmic portion of the chain corresponds to 298-316; that stretch reads FSYIVWRAMAVGWQCHRHR. A helical membrane pass occupies residues 317–337; sequence LPFAGYLAWAVGLALGLQAFI. The Periplasmic segment spans residues 338-352; it reads NMGVATGLLPTKGLT. A helical transmembrane segment spans residues 353–373; that stretch reads LPLFSYGGSSALATGAMVGLL. At 374–395 the chain is on the cytoplasmic side; that stretch reads LRCGYELAQARAEGRRPEEAAS.

Belongs to the SEDS family. FtsW subfamily.

Its subcellular location is the cell inner membrane. It catalyses the reaction [GlcNAc-(1-&gt;4)-Mur2Ac(oyl-L-Ala-gamma-D-Glu-L-Lys-D-Ala-D-Ala)](n)-di-trans,octa-cis-undecaprenyl diphosphate + beta-D-GlcNAc-(1-&gt;4)-Mur2Ac(oyl-L-Ala-gamma-D-Glu-L-Lys-D-Ala-D-Ala)-di-trans,octa-cis-undecaprenyl diphosphate = [GlcNAc-(1-&gt;4)-Mur2Ac(oyl-L-Ala-gamma-D-Glu-L-Lys-D-Ala-D-Ala)](n+1)-di-trans,octa-cis-undecaprenyl diphosphate + di-trans,octa-cis-undecaprenyl diphosphate + H(+). Its pathway is cell wall biogenesis; peptidoglycan biosynthesis. In terms of biological role, peptidoglycan polymerase that is essential for cell division. This Halorhodospira halophila (strain DSM 244 / SL1) (Ectothiorhodospira halophila (strain DSM 244 / SL1)) protein is Probable peptidoglycan glycosyltransferase FtsW.